Reading from the N-terminus, the 235-residue chain is Phosphoribosylaminoimidazole-succinocarboxamide synthase (235 aa).

Belongs to the SAICAR synthetase family.

It carries out the reaction 5-amino-1-(5-phospho-D-ribosyl)imidazole-4-carboxylate + L-aspartate + ATP = (2S)-2-[5-amino-1-(5-phospho-beta-D-ribosyl)imidazole-4-carboxamido]succinate + ADP + phosphate + 2 H(+). It participates in purine metabolism; IMP biosynthesis via de novo pathway; 5-amino-1-(5-phospho-D-ribosyl)imidazole-4-carboxamide from 5-amino-1-(5-phospho-D-ribosyl)imidazole-4-carboxylate: step 1/2. This chain is Phosphoribosylaminoimidazole-succinocarboxamide synthase, found in Streptococcus thermophilus (strain ATCC BAA-250 / LMG 18311).